A 374-amino-acid chain; its full sequence is Chaperone protein DnaJ (374 aa).

One can recognise a J domain in the interval 4–69 (DFYETLCVSR…QKRAAYDRFG (66 aa)). The segment at 131–210 (GKTAQIRVPT…CSGQGRLTEE (80 aa)) adopts a CR-type zinc-finger fold. 8 residues coordinate Zn(2+): C144, C147, C161, C164, C184, C187, C198, and C201. CXXCXGXG motif repeat units lie at residues 144–151 (CDECAGSG), 161–168 (CPMCHGAG), 184–191 (CPQCQGRG), and 198–205 (CRKCSGQG).

It belongs to the DnaJ family. Homodimer. It depends on Zn(2+) as a cofactor.

Its subcellular location is the cytoplasm. Its function is as follows. Participates actively in the response to hyperosmotic and heat shock by preventing the aggregation of stress-denatured proteins and by disaggregating proteins, also in an autonomous, DnaK-independent fashion. Unfolded proteins bind initially to DnaJ; upon interaction with the DnaJ-bound protein, DnaK hydrolyzes its bound ATP, resulting in the formation of a stable complex. GrpE releases ADP from DnaK; ATP binding to DnaK triggers the release of the substrate protein, thus completing the reaction cycle. Several rounds of ATP-dependent interactions between DnaJ, DnaK and GrpE are required for fully efficient folding. Also involved, together with DnaK and GrpE, in the DNA replication of plasmids through activation of initiation proteins. The polypeptide is Chaperone protein DnaJ (Chelativorans sp. (strain BNC1)).